The sequence spans 452 residues: Transcription factor SMP1 (452 aa).

An MADS-box domain is found at 3–57 (RRKIEIEPIKDDRNRTVTFIKRKAGLFKKAHELSVLCQVDIAVIILGSNNTFYEY). The mef2-type DNA-binding region spans 58 to 87 (SSVDMSNLLNVHQNNTDLPHNIIEPSDYGD). The tract at residues 97-142 (NERKRRRRRATVLQPASHSGSCTVSSQDSSSVQNNGNLSAPLASND) is disordered. The segment covering 115–127 (SGSCTVSSQDSSS) has biased composition (low complexity).

It belongs to the MEF2 family. Can heterodimerize with RLM1. Interacts with HOG1. Post-translationally, phosphorylated by HOG1.

The protein localises to the nucleus. Its function is as follows. Transcription factor that controls part of the HOG1-mediated osmostress responses. Binds to the DNA sequence 5'-ACTACTA[TA](4)TAG-3'. Does not appear to function in the MPK1 pathway. The sequence is that of Transcription factor SMP1 (SMP1) from Saccharomyces cerevisiae (strain ATCC 204508 / S288c) (Baker's yeast).